Reading from the N-terminus, the 335-residue chain is Phospho-N-acetylmuramoyl-pentapeptide-transferase (335 aa).

10 helical membrane passes run 3-23, 53-73, 78-98, 118-138, 143-163, 175-195, 200-220, 226-246, 251-271, and 314-334; these read LTLIAGLISLLLTALIMPHFI, GGTVFLLVASFVSFLFAILFF, SMGLITGILAIVLIYGFIGFL, LSLQIVGGLIFYFLHVVPSGI, VFGFPVHLGLLYIFFVLFWVV, IDGLASISVVISLLTYSVIAI, YDVLLLCGIMIGALLGFFIFN, VFMGDVGSLALGAMLAAISIA, WTLLVIGLVYVFETSSVMLQV, and VDAFLWSVGAVSSLIVLAILY.

Belongs to the glycosyltransferase 4 family. MraY subfamily. Mg(2+) serves as cofactor.

The protein localises to the cell membrane. It carries out the reaction UDP-N-acetyl-alpha-D-muramoyl-L-alanyl-gamma-D-glutamyl-L-lysyl-D-alanyl-D-alanine + di-trans,octa-cis-undecaprenyl phosphate = Mur2Ac(oyl-L-Ala-gamma-D-Glu-L-Lys-D-Ala-D-Ala)-di-trans,octa-cis-undecaprenyl diphosphate + UMP. Its pathway is cell wall biogenesis; peptidoglycan biosynthesis. Functionally, catalyzes the initial step of the lipid cycle reactions in the biosynthesis of the cell wall peptidoglycan: transfers peptidoglycan precursor phospho-MurNAc-pentapeptide from UDP-MurNAc-pentapeptide onto the lipid carrier undecaprenyl phosphate, yielding undecaprenyl-pyrophosphoryl-MurNAc-pentapeptide, known as lipid I. The protein is Phospho-N-acetylmuramoyl-pentapeptide-transferase of Streptococcus uberis (strain ATCC BAA-854 / 0140J).